Here is a 290-residue protein sequence, read N- to C-terminus: Eukaryotic translation initiation factor 3 subunit G (290 aa).

Disordered regions lie at residues 1–35 (MSRL…DGTK) and 157–200 (ESTG…GERM). The region spanning 210 to 288 (ATLRVTNVSE…LILRVEFAKR (79 aa)) is the RRM domain.

The protein belongs to the eIF-3 subunit G family. Component of the eukaryotic translation initiation factor 3 (eIF-3) complex.

The protein resides in the cytoplasm. Its function is as follows. RNA-binding component of the eukaryotic translation initiation factor 3 (eIF-3) complex, which is involved in protein synthesis of a specialized repertoire of mRNAs and, together with other initiation factors, stimulates binding of mRNA and methionyl-tRNAi to the 40S ribosome. The eIF-3 complex specifically targets and initiates translation of a subset of mRNAs involved in cell proliferation. This subunit can bind 18S rRNA. The protein is Eukaryotic translation initiation factor 3 subunit G (tif35) of Aspergillus clavatus (strain ATCC 1007 / CBS 513.65 / DSM 816 / NCTC 3887 / NRRL 1 / QM 1276 / 107).